A 590-amino-acid polypeptide reads, in one-letter code: Multidrug resistance ABC transporter ATP-binding and permease protein (590 aa).

Helical transmembrane passes span 35–55 (YLFF…QLQV), 79–99 (IALY…LGIF), 150–170 (IPQA…MLQM), 176–196 (LAMI…MTFG), 261–281 (VMML…IYLI), and 292–312 (LGMM…ATFF). Residues 38-317 (FIIGILAGIV…VATFFTELAK (280 aa)) form the ABC transmembrane type-1 domain. The ABC transporter domain maps to 349–584 (LSARHVDFAY…HPLYAKYVSE (236 aa)). 382 to 389 (GPSGGGKS) is an ATP binding site.

Belongs to the ABC transporter superfamily. Multidrug exporter LmrA (TC 3.A.1.117.1) family. In terms of assembly, homodimer.

It is found in the cell membrane. The catalysed reaction is ATP + H2O + xenobioticSide 1 = ADP + phosphate + xenobioticSide 2.. Functionally, efflux transporter for a variety of amphiphilic cationic compounds, including antibiotics. This chain is Multidrug resistance ABC transporter ATP-binding and permease protein (lmrA), found in Lactococcus lactis subsp. lactis (strain IL1403) (Streptococcus lactis).